A 345-amino-acid polypeptide reads, in one-letter code: Phosphoribosylformylglycinamidine cyclo-ligase (345 aa).

It belongs to the AIR synthase family.

It localises to the cytoplasm. The catalysed reaction is 2-formamido-N(1)-(5-O-phospho-beta-D-ribosyl)acetamidine + ATP = 5-amino-1-(5-phospho-beta-D-ribosyl)imidazole + ADP + phosphate + H(+). It functions in the pathway purine metabolism; IMP biosynthesis via de novo pathway; 5-amino-1-(5-phospho-D-ribosyl)imidazole from N(2)-formyl-N(1)-(5-phospho-D-ribosyl)glycinamide: step 2/2. The sequence is that of Phosphoribosylformylglycinamidine cyclo-ligase from Anaeromyxobacter dehalogenans (strain 2CP-C).